Consider the following 127-residue polypeptide: Small ribosomal subunit protein uS12 (127 aa).

Positions 1–28 are disordered; it reads MPTIQQLIRDERSKAKRKTKSPALKQCP. Aspartate 89 is subject to 3-methylthioaspartic acid. The segment at 104 to 127 is disordered; sequence ATGVKNRQKARSKYGTKRPKPAAK. Residues 109–127 are compositionally biased toward basic residues; sequence NRQKARSKYGTKRPKPAAK.

Belongs to the universal ribosomal protein uS12 family. As to quaternary structure, part of the 30S ribosomal subunit. Contacts proteins S8 and S17. May interact with IF1 in the 30S initiation complex.

Functionally, with S4 and S5 plays an important role in translational accuracy. Interacts with and stabilizes bases of the 16S rRNA that are involved in tRNA selection in the A site and with the mRNA backbone. Located at the interface of the 30S and 50S subunits, it traverses the body of the 30S subunit contacting proteins on the other side and probably holding the rRNA structure together. The combined cluster of proteins S8, S12 and S17 appears to hold together the shoulder and platform of the 30S subunit. The protein is Small ribosomal subunit protein uS12 of Microcystis aeruginosa (strain NIES-843 / IAM M-2473).